Reading from the N-terminus, the 163-residue chain is Protein GOLVEN 3 (163 aa).

Residues Met1–Glu20 form the signal peptide. A propeptide spanning residues Glu21–Asp141 is cleaved from the precursor. A Sulfotyrosine modification is found at Tyr143. Positions Pro144–Phe163 are disordered. Pro154 bears the Hydroxyproline mark. The propeptide occupies Arg158–Phe163.

Belongs to the RGF family. In terms of assembly, binds to LRR receptor-like serine/threonine-protein kinases RGI1, RGI2 and RGI3 to trigger their dimerization with SERK proteins and subsequent signaling. As to expression, expressed in roots, specifically in the root apical meristem (RAM).

The protein resides in the secreted. Functionally, signaling peptide (root growth factor) required during root gravitropism in a PIN2-traffic dependent manner, thus influencing the formation of auxin gradients. Maintains the postembryonic root stem cell niche. The protein is Protein GOLVEN 3 of Arabidopsis thaliana (Mouse-ear cress).